Reading from the N-terminus, the 107-residue chain is Small ribosomal subunit protein uS10m (107 aa).

This sequence belongs to the universal ribosomal protein uS10 family.

It localises to the mitochondrion. The polypeptide is Small ribosomal subunit protein uS10m (RPS10) (Prototheca wickerhamii).